The sequence spans 507 residues: Protein phosphatase 1J (507 aa).

Disordered regions lie at residues 1–102 (MLNR…RLPW) and 197–220 (LCLP…PQSC). Positions 14–23 (SSGGTSSQRS) are enriched in low complexity. The residue at position 41 (Thr-41) is a Phosphothreonine. A compositionally biased stretch (polar residues) spans 59–73 (TAETTVSFSRPTFLQ). Residues Ser-65 and Ser-75 each carry the phosphoserine modification. Residues 103–499 (STGYAEVINA…DDISVFVIPL (397 aa)) enclose the PPM-type phosphatase domain. Residues 199–212 (LPSTPGTPGAPSPS) show a composition bias toward low complexity.

Belongs to the PP2C family. Interacts with UBE2I/UBC9. Specifically expressed in the testicular germ cells.

The catalysed reaction is O-phospho-L-seryl-[protein] + H2O = L-seryl-[protein] + phosphate. It catalyses the reaction O-phospho-L-threonyl-[protein] + H2O = L-threonyl-[protein] + phosphate. The chain is Protein phosphatase 1J (Ppm1j) from Mus musculus (Mouse).